The chain runs to 290 residues: Bifunctional protein FolD 3 (290 aa).

NADP(+) is bound by residues 163–165 (GHS) and Ile-229.

Belongs to the tetrahydrofolate dehydrogenase/cyclohydrolase family. In terms of assembly, homodimer.

It carries out the reaction (6R)-5,10-methylene-5,6,7,8-tetrahydrofolate + NADP(+) = (6R)-5,10-methenyltetrahydrofolate + NADPH. The enzyme catalyses (6R)-5,10-methenyltetrahydrofolate + H2O = (6R)-10-formyltetrahydrofolate + H(+). Its pathway is one-carbon metabolism; tetrahydrofolate interconversion. In terms of biological role, catalyzes the oxidation of 5,10-methylenetetrahydrofolate to 5,10-methenyltetrahydrofolate and then the hydrolysis of 5,10-methenyltetrahydrofolate to 10-formyltetrahydrofolate. This Roseobacter denitrificans (strain ATCC 33942 / OCh 114) (Erythrobacter sp. (strain OCh 114)) protein is Bifunctional protein FolD 3.